We begin with the raw amino-acid sequence, 223 residues long: Immediate early response gene 2 protein (223 aa).

An N-acetylmethionine modification is found at M1. The segment at 63–172 (AALPSDPRLH…PPAQAEGAFP (110 aa)) is disordered. Residues 69 to 78 (PRLHPPREAE) show a composition bias toward basic and acidic residues. The segment covering 125–138 (SSLSDGGDAGLVPS) has biased composition (low complexity).

The protein belongs to the IER family. As to expression, expressed in activated T-cells (at protein level). Expression increases in metastatic tumor cells (at protein level).

It localises to the cytoplasm. The protein resides in the nucleus. DNA-binding protein that seems to act as a transcription factor. Involved in the regulation of neuronal differentiation, acts upon JNK-signaling pathway activation and plays a role in neurite outgrowth in hippocampal cells. May mediate with FIBP FGF-signaling in the establishment of laterality in the embryo. Promotes cell motility, seems to stimulate tumor metastasis. The protein is Immediate early response gene 2 protein of Homo sapiens (Human).